The following is a 402-amino-acid chain: Protein kinase US3 homolog (402 aa).

2 disordered regions span residues 1–21 (MSSS…KVHD) and 46–88 (FPDS…SPET). In terms of domain architecture, Protein kinase spans 102-386 (YNIVSSLSPG…AQDILMLPLF (285 aa)). Residues 108–116 (LSPGSEGYI) and lysine 129 each bind ATP. Aspartate 218 serves as the catalytic Proton acceptor.

It belongs to the protein kinase superfamily. Ser/Thr protein kinase family. Post-translationally, phosphorylated by UL13 homolog; this phosphorylation regulates subsequent phosphorylation of UL31 and UL34 homologs by US3. Autophosphorylated.

It localises to the host cytoplasm. It is found in the host nucleus. The catalysed reaction is L-seryl-[protein] + ATP = O-phospho-L-seryl-[protein] + ADP + H(+). The enzyme catalyses L-threonyl-[protein] + ATP = O-phospho-L-threonyl-[protein] + ADP + H(+). Multifunctional serine/threonine kinase that plays a role in several processes including egress of virus particles from the nucleus, modulation of the actin cytoskeleton and inhibition of apoptosis. Phosphorylates UL31 and UL34 homologs, two critical regulators of capsid budding from nucleus to endoplasmic reticulum, thereby facilitating virion egress. Modulates and redistributes host components of the nuclear envelope, including LMNA, emerin/EMD and the nuclear matrix protein MATR3. Phosphorylates envelope glycoprotein B (gB), probably to direct it to the cell surface. Promotes virus intracellular spread by restructuring host cell cytoskeleton. Blocks host apoptosis to extend cell survival and allow efficient viral replication. Promotes viral gene expression by phosphorylating host HDAC2 to reduce viral genome silencing. This is Protein kinase US3 homolog (MDV092) from Gallus gallus (Chicken).